The primary structure comprises 411 residues: Serpin A12 (411 aa).

Residues 1-20 form the signal peptide; that stretch reads MNLVLGLGLFLAGLLTVKGL. Residues Asn-92 and Asn-267 are each glycosylated (N-linked (GlcNAc...) asparagine). A reactive center loop region spans residues 364–382; it reads GTEGAAGSGAQTLPMETPR.

Belongs to the serpin family. As to quaternary structure, forms a stable complex with KLK7. In terms of processing, glycosylation slightly decreases affinity for heparin, but otherwise has no significant effect on KLK7 inhibitory activity or thermal stability of the protein. Expressed in visceral adipose tissues.

Its subcellular location is the secreted. Inhibition of KLK7 is enhanced by heparin. Its function is as follows. Adipokine that modulates insulin action by specifically inhibiting its target protease KLK7 in white adipose tissues. The protein is Serpin A12 (Serpina12) of Rattus norvegicus (Rat).